Reading from the N-terminus, the 123-residue chain is Fluoride-specific ion channel FluC (123 aa).

A run of 4 helical transmembrane segments spans residues 5–25 (IIAL…YISG), 35–55 (IGTL…YGLL), 67–87 (IFLG…SYET), and 100–120 (FANI…GFIL). Positions 75 and 78 each coordinate Na(+).

Belongs to the fluoride channel Fluc/FEX (TC 1.A.43) family.

It is found in the cell membrane. The catalysed reaction is fluoride(in) = fluoride(out). Na(+) is not transported, but it plays an essential structural role and its presence is essential for fluoride channel function. Fluoride-specific ion channel. Important for reducing fluoride concentration in the cell, thus reducing its toxicity. The sequence is that of Fluoride-specific ion channel FluC from Pyrococcus horikoshii (strain ATCC 700860 / DSM 12428 / JCM 9974 / NBRC 100139 / OT-3).